A 535-amino-acid polypeptide reads, in one-letter code: Dual specificity calcium/calmodulin-dependent 3',5'-cyclic nucleotide phosphodiesterase 1B (535 aa).

A disordered region spans residues 1–21 (MELSPRSPPEMLESDCPSPLE). 2 positions are modified to phosphoserine: Ser7 and Ser14. 2 calmodulin-binding regions span residues 27 to 47 (SKKM…QLEN) and 117 to 140 (EKPK…MFRR). Residues 145–502 (VGPTYSTAVH…QKWKERAASG (358 aa)) form the PDEase domain. Catalysis depends on His222, which acts as the Proton donor. Residues His226, His262, Asp263, and Asp369 each contribute to the Zn(2+) site. Residue Asp263 coordinates Mg(2+). Disordered stretches follow at residues 445–474 (PLTD…GDPN) and 495–535 (WKER…GNLD). The span at 454–463 (KSQPSFQWRQ) shows a compositional bias: polar residues. Phosphoserine occurs at positions 465 and 513.

This sequence belongs to the cyclic nucleotide phosphodiesterase family. PDE1 subfamily. As to quaternary structure, homodimer. Zn(2+) is required as a cofactor. The cofactor is Mg(2+). Expressed in brain.

Its subcellular location is the cytoplasm. It is found in the cytosol. It carries out the reaction a nucleoside 3',5'-cyclic phosphate + H2O = a nucleoside 5'-phosphate + H(+). The enzyme catalyses 3',5'-cyclic GMP + H2O = GMP + H(+). It catalyses the reaction 3',5'-cyclic AMP + H2O = AMP + H(+). With respect to regulation, type I PDE are activated by the binding of calmodulin in the presence of Ca(2+). In terms of biological role, cyclic nucleotide phosphodiesterase with a dual specificity for the second messengers cAMP and cGMP, which are key regulators of many important physiological processes. Has a preference for cGMP as a substrate. The protein is Dual specificity calcium/calmodulin-dependent 3',5'-cyclic nucleotide phosphodiesterase 1B of Rattus norvegicus (Rat).